The sequence spans 1116 residues: DUB-associated factor 1 (1116 aa).

WD repeat units lie at residues alanine 21–glutamate 62, lysine 91–aspartate 132, valine 160–alanine 200, serine 219–arginine 262, alanine 266–threonine 305, lysine 387–asparagine 426, and glycine 428–threonine 466. The interval leucine 578–lysine 600 is disordered. Position 668 is a phosphoserine (serine 668). Threonine 693 carries the post-translational modification Phosphothreonine. Residues isoleucine 747–glutamate 776 show a composition bias toward polar residues. 2 disordered regions span residues isoleucine 747 to glutamate 784 and phenylalanine 963 to glutamine 994. The segment covering serine 967 to glutamate 987 has biased composition (low complexity).

As to quaternary structure, interacts (via its WD repeats) with ubiquitin.

The protein localises to the cytoplasm. Functionally, ubiquitin-binding protein involved in the resistance to phenanthroline, sanguinarine, nordihydroguaiaretic acid (NDGA), isopropyl (N-3-chloro-phenyl)-carbamate (IPCPC) and guanosine 5'-O-(2-thiodiphosphate). The sequence is that of DUB-associated factor 1 from Saccharomyces cerevisiae (strain ATCC 204508 / S288c) (Baker's yeast).